The sequence spans 116 residues: Non-specific lipid-transfer protein (116 aa).

A signal peptide spans 1–22 (MSLKLACVVVLCMVVGAPLAQG). Disulfide bonds link cysteine 36–cysteine 52, cysteine 53–cysteine 98, and cysteine 73–cysteine 112.

Belongs to the plant LTP family.

Functionally, plant non-specific lipid-transfer proteins transfer phospholipids as well as galactolipids across membranes. May play a role in wax or cutin deposition in the cell walls of expanding epidermal cells and certain secretory tissues. The polypeptide is Non-specific lipid-transfer protein (Gossypium hirsutum (Upland cotton)).